Consider the following 156-residue polypeptide: Transcription antitermination protein NusB (156 aa).

It belongs to the NusB family.

Its function is as follows. Involved in transcription antitermination. Required for transcription of ribosomal RNA (rRNA) genes. Binds specifically to the boxA antiterminator sequence of the ribosomal RNA (rrn) operons. The polypeptide is Transcription antitermination protein NusB (Clostridium kluyveri (strain ATCC 8527 / DSM 555 / NBRC 12016 / NCIMB 10680 / K1)).